Here is a 228-residue protein sequence, read N- to C-terminus: PKHD-type hydroxylase XCV3086 (228 aa).

Residues 78–180 (RIYPPLFNRY…RVACFFWTQS (103 aa)) enclose the Fe2OG dioxygenase domain. His96, Asp98, and His161 together coordinate Fe cation. Arg171 contacts 2-oxoglutarate.

Fe(2+) serves as cofactor. L-ascorbate is required as a cofactor.

The chain is PKHD-type hydroxylase XCV3086 from Xanthomonas euvesicatoria pv. vesicatoria (strain 85-10) (Xanthomonas campestris pv. vesicatoria).